The sequence spans 465 residues: Biotin biosynthesis bifunctional protein BioCD (465 aa).

A malonyl-ACP O-methyltransferase region spans residues 1 to 254; it reads MTPFLPDRSI…AYGQWRKPRG (254 aa). ATP is bound by residues aspartate 234 and 263–268; that span reads GVGKTL. The tract at residues 255–465 is DTB synthetase; that stretch reads VFVTGTDTGV…DSLLSSNASR (211 aa). Residue threonine 267 coordinates Mg(2+). Lysine 283 is an active-site residue. Threonine 287 is a binding site for substrate. ATP is bound by residues aspartate 295, 351 to 354, and 435 to 437; these read EGAG and PQL. Positions 295 and 351 each coordinate Mg(2+).

In the N-terminal section; belongs to the methyltransferase superfamily. It in the C-terminal section; belongs to the dethiobiotin synthetase family. Mg(2+) serves as cofactor.

The protein localises to the cytoplasm. The catalysed reaction is (7R,8S)-7,8-diammoniononanoate + CO2 + ATP = (4R,5S)-dethiobiotin + ADP + phosphate + 3 H(+). The enzyme catalyses malonyl-[ACP] + S-adenosyl-L-methionine = malonyl-[ACP] methyl ester + S-adenosyl-L-homocysteine. It participates in cofactor biosynthesis; biotin biosynthesis; biotin from 7,8-diaminononanoate: step 1/2. It functions in the pathway cofactor biosynthesis; biotin biosynthesis. Functionally, converts the free carboxyl group of a malonyl-thioester to its methyl ester by transfer of a methyl group from S-adenosyl-L-methionine (SAM). It allows synthesis of pimeloyl-ACP via the fatty acid synthetic pathway. Catalyzes a mechanistically unusual reaction, the ATP-dependent insertion of CO2 between the N7 and N8 nitrogen atoms of 7,8-diaminopelargonic acid (DAPA, also called 7,8-diammoniononanoate) to form a ureido ring. The chain is Biotin biosynthesis bifunctional protein BioCD from Bordetella avium (strain 197N).